The primary structure comprises 362 residues: Caspase activity and apoptosis inhibitor 1 (362 aa).

A compositionally biased stretch (basic residues) spans 1–14 (MTGKKSSREKRRKR). Disordered regions lie at residues 1 to 44 (MTGK…SGCG) and 65 to 101 (TGGGSGGSCWGGSSVERGERRKRRSTDSSSSVSGSLQ). The span at 19–32 (AAAALAAPDLVPAV) shows a compositional bias: low complexity. Gly residues-rich tracts occupy residues 33 to 44 (GGSGSGSTSGCG) and 65 to 74 (TGGGSGGSCW). Position 89 is a phosphoserine (Ser89). Thr90 carries the post-translational modification Phosphothreonine. Residue Lys105 forms a Glycyl lysine isopeptide (Lys-Gly) (interchain with G-Cter in SUMO2) linkage. Residues Ser121 and Ser204 each carry the phosphoserine modification. Disordered stretches follow at residues 226–251 (SCVDSTSSLRENKQPEGLELKQGKGE), 269–291 (GPCNEEAAAPEVPENTVQSEAGQ), and 309–332 (LAESSPKEPKAATLTVPPPEDVQP). The segment covering 235-251 (RENKQPEGLELKQGKGE) has biased composition (basic and acidic residues). A compositionally biased stretch (low complexity) spans 273-282 (EEAAAPEVPE). Positions 282 to 312 (ENTVQSEAGQIDDLEKDIEKSVNEILGLAES) form a coiled coil. Ser313 is modified (phosphoserine).

In terms of biological role, anti-apoptotic protein that modulates a caspase-10 dependent mitochondrial caspase-3/9 feedback amplification loop. In Bos taurus (Bovine), this protein is Caspase activity and apoptosis inhibitor 1 (CAAP1).